The primary structure comprises 491 residues: MKNQDQALIFEVSKEGRIGYSLPKLDVEEVKLEDVFESDYIRVEDAELPEVSELDIMRHYTALSNRNHGVDSGFYPLGSCTMKYNPKINESVARFAGFANIHPLQDEKTVQGAMELMYDLQEHLIEITGMDTVTLQPAAGAHGEWTGLMLIRAYHEANGDFNRTKVIVPDSAHGTNPASATVAGFETITVKSNEHGLVDLEDLKRVVNEETAALMLTNPNTLGLFEENILEMAEIVHNAGGKLYYDGANLNAVLSQARPGDMGFDVVHLNLHKTFTGPHGGGGPGSGPVGVKADLIPYLPKPILEKTEDGYRFNYDRPEAIGRVKPFYGNFGINVRAYTYIRSMGPDGLRAVTEYAVLNANYMMRRLAPFYDLPFDRHCKHEFVLSGRRQKKLGVRTLDIAKRLLDFGYHPPTIYFPLNVEECIMIEPTETESKETLDGFIDKMIQIAKEVEENPEVVQEAPHTTVIKRLDETMAARKPVLRYEKPAPVQV.

Residue K273 is modified to N6-(pyridoxal phosphate)lysine.

This sequence belongs to the GcvP family. C-terminal subunit subfamily. As to quaternary structure, the glycine cleavage system is composed of four proteins: P, T, L and H. In this organism, the P 'protein' is a heterodimer of two subunits. It depends on pyridoxal 5'-phosphate as a cofactor.

The enzyme catalyses N(6)-[(R)-lipoyl]-L-lysyl-[glycine-cleavage complex H protein] + glycine + H(+) = N(6)-[(R)-S(8)-aminomethyldihydrolipoyl]-L-lysyl-[glycine-cleavage complex H protein] + CO2. Functionally, the glycine cleavage system catalyzes the degradation of glycine. The P protein binds the alpha-amino group of glycine through its pyridoxal phosphate cofactor; CO(2) is released and the remaining methylamine moiety is then transferred to the lipoamide cofactor of the H protein. The chain is Probable glycine dehydrogenase (decarboxylating) subunit 2 from Bacillus cereus (strain ATCC 10987 / NRS 248).